A 630-amino-acid chain; its full sequence is 1,4-alpha-glucan branching enzyme GlgB (630 aa).

D311 functions as the Nucleophile in the catalytic mechanism. E362 functions as the Proton donor in the catalytic mechanism.

It belongs to the glycosyl hydrolase 13 family. GlgB subfamily. In terms of assembly, monomer.

The enzyme catalyses Transfers a segment of a (1-&gt;4)-alpha-D-glucan chain to a primary hydroxy group in a similar glucan chain.. It functions in the pathway glycan biosynthesis; glycogen biosynthesis. Functionally, catalyzes the formation of the alpha-1,6-glucosidic linkages in glycogen by scission of a 1,4-alpha-linked oligosaccharide from growing alpha-1,4-glucan chains and the subsequent attachment of the oligosaccharide to the alpha-1,6 position. The protein is 1,4-alpha-glucan branching enzyme GlgB of Aquifex aeolicus (strain VF5).